A 1479-amino-acid chain; its full sequence is C-type mannose receptor 2 (1479 aa).

The N-terminal stretch at 1 to 30 (MVPIRPALAPWPRHLLRCVLLLGGLRLGHP) is a signal peptide. At 31–1413 (ADSAAALLEP…SAALPESPVA (1383 aa)) the chain is on the extracellular side. The 154-residue stretch at 37–190 (LLEPDVFLIF…SHGKPCTIPF (154 aa)) folds into the Ricin B-type lectin domain. An intrachain disulfide couples Cys92 to Cys111. N-linked (GlcNAc...) asparagine glycans are attached at residues Asn101 and Asn139. A Fibronectin type-II domain is found at 181–229 (SHGKPCTIPFKYDNQWFHGCTSTGREDGHLWCATTQDYGKDERWGFCPI). Cystine bridges form between Cys186-Cys212, Cys200-Cys227, Cys265-Cys358, and Cys334-Cys350. The C-type lectin 1 domain maps to 243–359 (LTDSCYQFNF…CSIALPYVCK (117 aa)). N-linked (GlcNAc...) asparagine glycosylation is present at Asn363. C-type lectin domains are found at residues 388-504 (FQGH…SICK), 527-643 (HSPS…RYIC), 677-808 (KLRH…WICK), 831-950 (FQEA…YICK), 978-1106 (FLNK…GFIC), 1131-1242 (YLNH…GAVC), and 1271-1391 (FREH…GVVC). 7 cysteine pairs are disulfide-bonded: Cys409–Cys503, Cys480–Cys495, Cys617–Cys634, Cys703–Cys807, Cys784–Cys799, Cys852–Cys949, and Cys926–Cys941. Asn1028 carries an N-linked (GlcNAc...) asparagine glycan. A disulfide bridge links Cys1077 with Cys1097. Lys1141 is covalently cross-linked (Glycyl lysine isopeptide (Lys-Gly) (interchain with G-Cter in SUMO1)). Cysteines 1219 and 1233 form a disulfide. N-linked (GlcNAc...) asparagine glycosylation occurs at Asn1348. An intrachain disulfide couples Cys1367 to Cys1382. The helical transmembrane segment at 1414–1434 (LVVVLTAVLLLLALMTAALIL) threads the bilayer. Residues 1435–1479 (YRRRQSAERGSFEGARYSRSSHSGPAEATEKNILVSDMEMNEQQE) are Cytoplasmic-facing. The disordered stretch occupies residues 1446–1479 (FEGARYSRSSHSGPAEATEKNILVSDMEMNEQQE).

As to quaternary structure, interacts directly with PLAUR/UPAR and PLAU/pro-UPA to form a tri-molecular complex. Interacts with collagen V and with C-terminal region of type I collagen/COL1A1. Phosphorylated. As to expression, highly expressed in heart, lung and kidney, but little or no expression in brain, thymus or adult liver. Expressed at highly endothelialized sites such as those in choroid plexus and kidney glomerulai as well as in chondrocytes in cartilaginous regions of the embryo.

The protein resides in the membrane. Its function is as follows. May play a role as endocytotic lectin receptor displaying calcium-dependent lectin activity. Internalizes glycosylated ligands from the extracellular space for release in an endosomal compartment via clathrin-mediated endocytosis. May be involved in plasminogen activation system controlling the extracellular level of PLAUR/PLAU, and thus may regulate protease activity at the cell surface. May contribute to cellular uptake, remodeling and degradation of extracellular collagen matrices. May participate in remodeling of extracellular matrix cooperating with the matrix metalloproteinases (MMPs). In Mus musculus (Mouse), this protein is C-type mannose receptor 2 (Mrc2).